Here is a 178-residue protein sequence, read N- to C-terminus: Large ribosomal subunit protein eL20 (178 aa).

Belongs to the eukaryotic ribosomal protein eL20 family.

The sequence is that of Large ribosomal subunit protein eL20 (RPL18A) from Castanea sativa (Sweet chestnut).